We begin with the raw amino-acid sequence, 844 residues long: Janus kinase and microtubule-interacting protein 3 (844 aa).

Residues Ser-8–His-259 adopt a coiled-coil conformation. A disordered region spans residues Gln-249–Lys-290. Residues Lys-254 to Leu-267 show a composition bias toward basic and acidic residues. Low complexity predominate over residues Ala-270–Ser-282. Residues Glu-289–Ala-421 are a coiled coil. Phosphoserine is present on Ser-384. Polar residues predominate over residues Ser-466–Cys-483. The interval Ser-466 to Asp-488 is disordered. Coiled-coil stretches lie at residues Met-493–Lys-621 and Glu-688–Phe-833.

It belongs to the JAKMIP family.

Its subcellular location is the golgi apparatus. The chain is Janus kinase and microtubule-interacting protein 3 (Jakmip3) from Mus musculus (Mouse).